The following is a 158-amino-acid chain: Phosphopantetheine adenylyltransferase (158 aa).

Thr-8 is a binding site for substrate. Residues 8–9 and His-16 each bind ATP; that span reads TF. Substrate is bound by residues Lys-40, Leu-72, and Arg-86. ATP-binding positions include 87–89, Glu-97, and 122–128; these read GLR and HAFISSS.

The protein belongs to the bacterial CoaD family. Homohexamer. Requires Mg(2+) as cofactor.

It is found in the cytoplasm. It catalyses the reaction (R)-4'-phosphopantetheine + ATP + H(+) = 3'-dephospho-CoA + diphosphate. It participates in cofactor biosynthesis; coenzyme A biosynthesis; CoA from (R)-pantothenate: step 4/5. In terms of biological role, reversibly transfers an adenylyl group from ATP to 4'-phosphopantetheine, yielding dephospho-CoA (dPCoA) and pyrophosphate. The sequence is that of Phosphopantetheine adenylyltransferase from Campylobacter jejuni subsp. jejuni serotype O:6 (strain 81116 / NCTC 11828).